Here is a 76-residue protein sequence, read N- to C-terminus: Large ribosomal subunit protein bL31 (76 aa).

It belongs to the bacterial ribosomal protein bL31 family. Type A subfamily. Part of the 50S ribosomal subunit.

Functionally, binds the 23S rRNA. This Gluconacetobacter diazotrophicus (strain ATCC 49037 / DSM 5601 / CCUG 37298 / CIP 103539 / LMG 7603 / PAl5) protein is Large ribosomal subunit protein bL31.